Here is a 1077-residue protein sequence, read N- to C-terminus: Teashirt homolog 1-B (1077 aa).

Disordered regions lie at residues 1-110 (MPRR…NASY) and 142-179 (NEKA…SCTN). Acidic residues predominate over residues 26–36 (TEEDNLEDDGL). The span at 56-69 (TQSYQNSPISSATN) shows a compositional bias: polar residues. The span at 160–179 (SGPTSDPGTPTTITSSSCTN) shows a compositional bias: low complexity. The C2H2-type 1 zinc-finger motif lies at 248–272 (FRCKDCSAAYDTLVELTVHMNETGH). Residues 274–286 (RDDNRDREAERTK) show a composition bias toward basic and acidic residues. Positions 274 to 300 (RDDNRDREAERTKRWSKPRKRSLMEME) are disordered. The C2H2-type 2 zinc finger occupies 309-333 (LKCMYCGHSFESLQDLSVHMIKTKH). Positions 362 to 394 (ALPDSPEQAGISPGASVSESAKDPKAANPYVTP) are disordered. The C2H2-type 3 zinc-finger motif lies at 418-442 (LKCMECGSSHDTLQQLTAHMMVTGH). Disordered stretches follow at residues 473–530 (PPTT…KIEP) and 849–873 (GRLT…SSFE). The span at 497–529 (HSEEKKDPEKEKVNIGEVEKKIKEENEDPEKIE) shows a compositional bias: basic and acidic residues. The segment covering 853-862 (PKSSTPSTVS) has biased composition (polar residues). The homeobox DNA-binding region spans 885–955 (RKGRQSNWNP…NVKYQLRRTG (71 aa)). C2H2-type zinc fingers lie at residues 970-992 (FFCN…LETH) and 1037-1060 (FQCK…SKTH).

This sequence belongs to the teashirt C2H2-type zinc-finger protein family.

It is found in the nucleus. Probable transcriptional regulator involved in developmental processes. May act as a transcriptional repressor (Potential). Involved in two major neuronal regionalization processes: primary anteroposterior (AP) axis patterning of the CNS and segmentation of the cranial neuronal crest (CNS) development. The chain is Teashirt homolog 1-B (tshz1-b) from Xenopus laevis (African clawed frog).